Reading from the N-terminus, the 725-residue chain is Lipoamidase (725 aa).

Residues 1–52 (MLAQESILETTVQTETESVTTETSQTVANLESETTSQTVMQEKESSSAIAES) form a disordered region. The span at 9-27 (ETTVQTETESVTTETSQTV) shows a compositional bias: low complexity. A compositionally biased stretch (polar residues) spans 28-40 (ANLESETTSQTVM). Active-site charge relay system residues include K159 and S235. S259 (acyl-ester intermediate) is an active-site residue. Residues 551 to 686 (KINQPHVEEP…NKSMIGKQEQ (136 aa)) form a disordered region. Positions 556–637 (HVEEPDKDKE…TSEGPIEGKD (82 aa)) are enriched in basic and acidic residues. The span at 650–661 (SGSSLDNSLNSS) shows a compositional bias: low complexity. Residues 662 to 679 (ANQGTKSTESTHAFSNKS) show a composition bias toward polar residues. Residues 700 to 720 (PSTFWIVLGGAFLVTSGTIYI) traverse the membrane as a helical segment.

Belongs to the amidase family. As to quaternary structure, homodimer in solution.

The protein localises to the cell membrane. The enzyme catalyses N(6)-[(R)-lipoyl]-L-lysyl-[lipoyl-carrier protein] + H2O = L-lysyl-[lipoyl-carrier protein] + (R)-lipoate. Lipoamidase activity is slightly inhibited by p-chloromercuribenzoate. Its function is as follows. Amidohydrolase that releases lipoic acid from the protein-bound form. Cleaves the amide bond that links lipoic acid to the lipoylated lysine epsilon-amino groups, leading to the formation of free lipoic acid plus the unmodified protein. Shows activity toward both high molecular weight protein substrates such as a lipoyl domain and intact 2-oxoacid dehydrogenases as well as small molecule substrates such as lipoyl-lysine. Also acts on small biotinylated substrates. Hydrolyzes the synthetic substrates methyl lipoate and lipoamide. The physiologically important substrates are probably lipoyl-lysine and small peptides containing lipoyl-lysine. Lpa seems likely to enable this bacterium to utilize amide-linked forms of lipoic acid that otherwise could not be assimilated. This chain is Lipoamidase, found in Enterococcus faecalis (Streptococcus faecalis).